The sequence spans 1080 residues: MLRTVSCLASRSSSSLFFRFFRQFPRSYMSLTSSTAALRVPSRNLRRISSPSVAGRRLLLRRGLRIPSAAVRSVNGQFSRLSVRAVATQPAPLYPDVGQDEAEKLGFEKVSEEFISECKSKAILFKHKKTGCEVMSVSNEDENKVFGVVFRTPPKDSTGIPHILEHSVLCGSRKYPVKEPFVELLKGSLHTFLNAFTYPDRTCYPVASTNTKDFYNLVDVYLDAVFFPKCVDDAHTFQQEGWHYELNDPSEDISYKGVVFNEMKGVYSQPDNILGRIAQQALSPENTYGVDSGGDPKDIPNLTFEEFKEFHRQYYHPSNARIWFYGDDDPVHRLRVLSEYLDMFEASPSPNSSKIKFQKLFSEPVRLVEKYPAGRDGDLKKKHMLCVNWLLSEKPLDLQTQLALGFLDHLMLGTPASPLRKILLESGLGEALVSSGLSDELLQPQFGIGLKGVSEENVQKVEELIMDTLKKLAEEGFDNDAVEASMNTIEFSLRENNTGSFPRGLSLMLQSISKWIYDMDPFEPLKYTEPLKALKTRIAEEGSKAVFSPLIEKLILNNSHRVTIEMQPDPEKATQEEVEEKNILEKVKAAMTEEDLAELARATEELKLKQETPDPPEALRCVPSLNLGDIPKEPTYVPTEVGDINGVKVLRHDLFTNDIIYTEVVFDIGSLKHELLPLVPLFCQSLLEMGTKDLTFVQLNQLIGRKTGGISVYPLTSSVRGKDEPCSKIIVRGKSMAGRADDLFNLMNCLLQEVQFTDQQRFKQFVSQSRARMENRLRGSGHGIAAARMDAMLNIAGWMSEQMGGLSYLEFLHTLEKKVDEDWEGISSSLEEIRRSLLARNGCIVNMTADGKSLTNVEKSVAKFLDLLPENPSGGLVTWDGRLPLRNEAIVIPTQVNYVGKAGNIYSTGYELDGSAYVISKHISNTWLWDRVRVSGGAYGGFCDFDSHSGVFSYLSYRDPNLLKTLDIYDGTGDFLRGLDVDQETLTKAIIGTIGDVDSYQLPDAKGYSSLLRHLLGVTDEERQRKREEILTTSLKDFKDFAQAIDVVRDKGVAVAVASAEDIDAANNERSNFFEVKKAL.

The N-terminal 85 residues, 1–85, are a transit peptide targeting the chloroplast and mitochondrion; sequence MLRTVSCLAS…GQFSRLSVRA (85 aa). At Val86 the chain carries N-acetylvaline. His162 contacts Zn(2+). The active-site Proton acceptor is the Glu165. His166 serves as a coordination point for Zn(2+). Glu240 is a catalytic residue. Residue Glu262 participates in Zn(2+) binding. Residues 571–612 adopt a coiled-coil conformation; sequence EKATQEEVEEKNILEKVKAAMTEEDLAELARATEELKLKQET. Arg705 is a Mg(2+) binding site.

The protein belongs to the peptidase M16 family. PreP subfamily. Homodimer. Zn(2+) serves as cofactor. The cofactor is Mg(2+). In terms of tissue distribution, expressed only in siliques and flowers.

It is found in the plastid. Its subcellular location is the chloroplast stroma. The protein localises to the mitochondrion matrix. With respect to regulation, inactive in the absence of MgCl(2) and CaCl(2) and full activation at 10 mM concentrations of either ion. Completely inhibited by the metal chelator orthophenanthroline, but not affected by phenylmethylsulfonyl fluoride (PMSF) or N-ethylmaleimide (NEM). In terms of biological role, ATP-independent protease that degrades both mitochondrial and chloroplastic transit peptides after their cleavage. Also degrades other unstructured peptides. Specific for peptides in the range of 10 to 65 residues. Shows a preference for cleavage after small polar residues and before basic residues, with a bias for positively charged amino acid residues. This is Presequence protease 1, chloroplastic/mitochondrial (PREP1) from Arabidopsis thaliana (Mouse-ear cress).